The sequence spans 466 residues: Asparagine--tRNA ligase (466 aa).

Belongs to the class-II aminoacyl-tRNA synthetase family. As to quaternary structure, homodimer.

It localises to the cytoplasm. The catalysed reaction is tRNA(Asn) + L-asparagine + ATP = L-asparaginyl-tRNA(Asn) + AMP + diphosphate + H(+). This Myxococcus xanthus (strain DK1622) protein is Asparagine--tRNA ligase.